We begin with the raw amino-acid sequence, 140 residues long: Putative pre-16S rRNA nuclease (140 aa).

The protein belongs to the YqgF nuclease family.

It is found in the cytoplasm. Its function is as follows. Could be a nuclease involved in processing of the 5'-end of pre-16S rRNA. This is Putative pre-16S rRNA nuclease from Aeromonas hydrophila subsp. hydrophila (strain ATCC 7966 / DSM 30187 / BCRC 13018 / CCUG 14551 / JCM 1027 / KCTC 2358 / NCIMB 9240 / NCTC 8049).